The sequence spans 159 residues: Pathogenesis-related leaf protein 6 (159 aa).

A signal peptide spans 1–24 (MGLFNISLLLTCLMVLAIFHSCEA). A Pyrrolidone carboxylic acid modification is found at Gln25. The SCP domain occupies 32-147 (LAVHNDARAQ…NGWWFISCNY (116 aa)). 3 disulfide bridges follow: Cys68–Cys136, Cys109–Cys115, and Cys131–Cys145.

Belongs to the CRISP family.

Functionally, probably involved in the defense reaction of plants against pathogens. Has antifungal activity. The chain is Pathogenesis-related leaf protein 6 (PR1B1) from Solanum lycopersicum (Tomato).